The chain runs to 262 residues: Hydroxyethylthiazole kinase (262 aa).

Methionine 50 lines the substrate pocket. ATP-binding residues include arginine 125 and threonine 171. Glycine 198 contributes to the substrate binding site.

The protein belongs to the Thz kinase family. Requires Mg(2+) as cofactor.

The enzyme catalyses 5-(2-hydroxyethyl)-4-methylthiazole + ATP = 4-methyl-5-(2-phosphooxyethyl)-thiazole + ADP + H(+). The protein operates within cofactor biosynthesis; thiamine diphosphate biosynthesis; 4-methyl-5-(2-phosphoethyl)-thiazole from 5-(2-hydroxyethyl)-4-methylthiazole: step 1/1. Functionally, catalyzes the phosphorylation of the hydroxyl group of 4-methyl-5-beta-hydroxyethylthiazole (THZ). The polypeptide is Hydroxyethylthiazole kinase (Escherichia coli O157:H7).